A 175-amino-acid chain; its full sequence is ATP synthase subunit delta (175 aa).

It belongs to the ATPase delta chain family. As to quaternary structure, F-type ATPases have 2 components, F(1) - the catalytic core - and F(0) - the membrane proton channel. F(1) has five subunits: alpha(3), beta(3), gamma(1), delta(1), epsilon(1). F(0) has three main subunits: a(1), b(2) and c(10-14). The alpha and beta chains form an alternating ring which encloses part of the gamma chain. F(1) is attached to F(0) by a central stalk formed by the gamma and epsilon chains, while a peripheral stalk is formed by the delta and b chains.

It localises to the cell membrane. In terms of biological role, f(1)F(0) ATP synthase produces ATP from ADP in the presence of a proton or sodium gradient. F-type ATPases consist of two structural domains, F(1) containing the extramembraneous catalytic core and F(0) containing the membrane proton channel, linked together by a central stalk and a peripheral stalk. During catalysis, ATP synthesis in the catalytic domain of F(1) is coupled via a rotary mechanism of the central stalk subunits to proton translocation. Functionally, this protein is part of the stalk that links CF(0) to CF(1). It either transmits conformational changes from CF(0) to CF(1) or is implicated in proton conduction. In Brevibacillus brevis (strain 47 / JCM 6285 / NBRC 100599), this protein is ATP synthase subunit delta.